The following is a 226-amino-acid chain: Protein-L-isoaspartate(D-aspartate) O-methyltransferase (226 aa).

S-adenosyl-L-homocysteine contacts are provided by residues Val57 to Ser60, His65, Ser89, Glu115 to His116, Asp147 to Gly148, and Thr222. Ser60 is an active-site residue.

This sequence belongs to the methyltransferase superfamily. L-isoaspartyl/D-aspartyl protein methyltransferase family. As to quaternary structure, monomer.

It localises to the cytoplasm. The protein resides in the cytosol. The enzyme catalyses [protein]-L-isoaspartate + S-adenosyl-L-methionine = [protein]-L-isoaspartate alpha-methyl ester + S-adenosyl-L-homocysteine. Initiates the repair of damaged proteins by catalyzing methyl esterification of L-isoaspartyl and D-aspartyl residues produced by spontaneous isomerization and racemization of L-aspartyl and L-asparaginyl residues in aging peptides and proteins. The chain is Protein-L-isoaspartate(D-aspartate) O-methyltransferase (Pcmt) from Drosophila melanogaster (Fruit fly).